Reading from the N-terminus, the 833-residue chain is CUB domain-containing protein 1 (833 aa).

Positions 1-29 (MAHSACGFSVALLGALLLGTARLLRGTEA) are cleaved as a signal peptide. Residues 30–666 (SEIALPQRSG…VTLTPRTVDL (637 aa)) are Extracellular-facing. N122, N180, N205, N270, N310, N342, and N386 each carry an N-linked (GlcNAc...) asparagine glycan. The CUB domain maps to 417–540 (CLDHRYCYRQ…QGLIVSYTPY (124 aa)). C476 and C499 are disulfide-bonded. Residues 667 to 687 (AVVIGAAGGGALLLFALVLII) traverse the membrane as a helical segment. Residues 688–833 (CFVKKKKKVD…HTQGPVETEE (146 aa)) are Cytoplasmic-facing. Y731 is subject to Phosphotyrosine. Positions 783–833 (AKFTAEELAPSSPPESESEPYTFSHPNKGEIGVRETDIPLLHTQGPVETEE) are disordered. A compositionally biased stretch (basic and acidic residues) spans 809–819 (NKGEIGVRETD).

Interacts with CDH2/N-cadherin, CDH3/P-cadherin, SDC1/syndecan-1, SDC4/syndecan-4 and the serine protease ST14/MT-SP1. Also interacts SRC and PRKCG/protein kinase C gamma. Phosphorylated on tyrosine by kinases of the SRC family such as SRC and YES as well as by the protein kinase C gamma/PRKCG. Dephosphorylated by phosphotyrosine phosphatases. Also phosphorylated by suramin, a heparin analog. Tyrosine phosphorylated in response to dissociation of integrin alpha-6 beta-4 from laminin-5. In terms of processing, N-glycosylated. Post-translationally, a soluble form may also be produced by proteolytic cleavage at the cell surface (shedding). Another peptide of 80 kDa (p80) is present in cultured keratinocytes probably due to tryptic cleavage at an unidentified site on the N-terminal side. Converted to p80 by plasmin, a trypsin-like protease.

It is found in the cell membrane. May be involved in cell adhesion and cell matrix association. May play a role in the regulation of anchorage versus migration or proliferation versus differentiation via its phosphorylation. May be a novel marker for leukemia diagnosis and for immature hematopoietic stem cell subsets. Belongs to the tetraspanin web involved in tumor progression and metastasis. The polypeptide is CUB domain-containing protein 1 (Cdcp1) (Mus musculus (Mouse)).